The sequence spans 291 residues: uncharacterized protein (291 aa).

This is an uncharacterized protein from Acanthamoeba polyphaga mimivirus (APMV).